We begin with the raw amino-acid sequence, 416 residues long: Calreticulin (416 aa).

The first 17 residues, 1–17 (MLLSVPLLLGLLGLAAA), serve as a signal peptide directing secretion. Positions 18 to 197 (DPAIYFKEQF…NSQVESGSLE (180 aa)) are N-domain. Q26 contributes to the Ca(2+) binding site. At K48 the chain carries N6-acetyllysine. Ca(2+) is bound by residues K62 and K64. An N6-(2-hydroxyisobutyryl)lysine modification is found at K64. C105 and C137 are disulfide-bonded. 4 residues coordinate an alpha-D-glucoside: Y109, K111, Y128, and D135. K159 bears the N6-acetyllysine mark. The 1-1 repeat unit spans residues 191-202 (VESGSLEDDWDF). The interval 191 to 255 (VESGSLEDDW…DAKKPEDWDE (65 aa)) is 4 X approximate repeats. The disordered stretch occupies residues 193–277 (SGSLEDDWDF…NPEYKGEWKP (85 aa)). The segment at 198–308 (DDWDFLPPKK…YSPDANIYAY (111 aa)) is P-domain. Basic and acidic residues predominate over residues 207 to 251 (KIKDPDAAKPEDWDERAKIDDPTDSKPEDWDKPEHIPDPDAKKPE). An N6-acetyllysine modification is found at K209. 6 tandem repeats follow at residues 210-221 (DPDAAKPEDWDE), 227-238 (DPTDSKPEDWDK), 244-255 (DPDAKKPEDWDE), 259-269 (GEWEPPVIQNP), 273-283 (GEWKPRQIDNP), and 287-297 (GTWIHPEIDNP). Residues 237-270 (DKPEHIPDPDAKKPEDWDEEMDGEWEPPVIQNPE) are interaction with PPIB. Positions 252–261 (DWDEEMDGEW) are enriched in acidic residues. The tract at residues 259 to 297 (GEWEPPVIQNPEYKGEWKPRQIDNPDYKGTWIHPEIDNP) is 3 X approximate repeats. A C-domain region spans residues 309 to 416 (DSFAVLGLDL…ESPGQAKDEL (108 aa)). D317 contributes to the an alpha-D-glucoside binding site. D328 lines the Ca(2+) pocket. Residues 350 to 416 (TKAAEKQMKD…ESPGQAKDEL (67 aa)) are disordered. A compositionally biased stretch (basic and acidic residues) spans 352–379 (AAEKQMKDKQDEEQRLKEEEEDKKRKEE). Residues 380 to 408 (EEAEDKEDDDDRDEDEDEEDEKEEDEEES) show a composition bias toward acidic residues. The Prevents secretion from ER motif lies at 413-416 (KDEL).

It belongs to the calreticulin family. In terms of assembly, monomer. Interacts with GABARAP, NR3C1, PDIA3/ERp57 and TRIM21. Interacts (via P-domain) with PDIA5. Interacts with PPIB. Interacts with SPACA9. Component of an EIF2 complex at least composed of CELF1/CUGBP1, CALR, CALR3, EIF2S1, EIF2S2, HSP90B1 and HSPA5. Interacts with CLCC1.

The protein localises to the endoplasmic reticulum lumen. Its subcellular location is the cytoplasm. The protein resides in the cytosol. It is found in the cytolytic granule. It localises to the secreted. The protein localises to the extracellular space. Its subcellular location is the extracellular matrix. The protein resides in the cell surface. It is found in the sarcoplasmic reticulum lumen. It localises to the cytoplasmic vesicle. The protein localises to the secretory vesicle. Its subcellular location is the cortical granule. In terms of biological role, calcium-binding chaperone that promotes folding, oligomeric assembly and quality control in the endoplasmic reticulum (ER) via the calreticulin/calnexin cycle. This lectin interacts transiently with almost all of the monoglucosylated glycoproteins that are synthesized in the ER. Interacts with the DNA-binding domain of NR3C1 and mediates its nuclear export. Involved in maternal gene expression regulation. May participate in oocyte maturation via the regulation of calcium homeostasis. Present in the cortical granules of non-activated oocytes, is exocytosed during the cortical reaction in response to oocyte activation and might participate in the block to polyspermy. This Mus musculus (Mouse) protein is Calreticulin (Calr).